Reading from the N-terminus, the 266-residue chain is Undecaprenyl-diphosphatase (266 aa).

8 helical membrane passes run 1-21 (METFQVILLALIQGLTEFLPI), 39-59 (QGLSFDVAVNTGSLFAVVIYF), 87-107 (WWIILATIPAVIVGFTAKDFI), 111-131 (FRNTLVIAITTIVFGLLLWAA), 144-164 (MGWKKALLIGLAQAMALIPGT), 183-203 (AAARFSFLMSVPVSFGAALLV), 218-238 (ALGLGIVVSFVAAYLCIHFFL), and 244-264 (IGMTPFVLYRLALGAILLGLL).

It belongs to the UppP family.

It localises to the cell inner membrane. It catalyses the reaction di-trans,octa-cis-undecaprenyl diphosphate + H2O = di-trans,octa-cis-undecaprenyl phosphate + phosphate + H(+). Catalyzes the dephosphorylation of undecaprenyl diphosphate (UPP). Confers resistance to bacitracin. The sequence is that of Undecaprenyl-diphosphatase from Shewanella frigidimarina (strain NCIMB 400).